A 468-amino-acid chain; its full sequence is F-box/LRR-repeat protein At4g14096 (468 aa).

In terms of domain architecture, F-box spans R7–P60. LRR repeat units follow at residues V114–S136, T138–S167, Y169–D194, S216–D241, T292–S323, and N324–G349.

The protein is F-box/LRR-repeat protein At4g14096 of Arabidopsis thaliana (Mouse-ear cress).